The chain runs to 39 residues: Conotoxin Cl14.7 (39 aa).

Residues Met-1–Gln-15 constitute a propeptide that is removed on maturation.

Post-translationally, contains 2 disulfide bonds. In terms of tissue distribution, expressed by the venom duct.

It is found in the secreted. The polypeptide is Conotoxin Cl14.7 (Californiconus californicus (California cone)).